We begin with the raw amino-acid sequence, 805 residues long: DNA gyrase subunit B (805 aa).

Positions 431 to 546 (CEMYIVEGDS…NECVYIAQPP (116 aa)) constitute a Toprim domain. Mg(2+)-binding residues include Glu437, Asp511, and Asp513.

Belongs to the type II topoisomerase GyrB family. Heterotetramer, composed of two GyrA and two GyrB chains. In the heterotetramer, GyrA contains the active site tyrosine that forms a transient covalent intermediate with DNA, while GyrB binds cofactors and catalyzes ATP hydrolysis. It depends on Mg(2+) as a cofactor. Mn(2+) is required as a cofactor. Ca(2+) serves as cofactor.

It is found in the cytoplasm. The catalysed reaction is ATP-dependent breakage, passage and rejoining of double-stranded DNA.. Functionally, a type II topoisomerase that negatively supercoils closed circular double-stranded (ds) DNA in an ATP-dependent manner to modulate DNA topology and maintain chromosomes in an underwound state. Negative supercoiling favors strand separation, and DNA replication, transcription, recombination and repair, all of which involve strand separation. Also able to catalyze the interconversion of other topological isomers of dsDNA rings, including catenanes and knotted rings. Type II topoisomerases break and join 2 DNA strands simultaneously in an ATP-dependent manner. The sequence is that of DNA gyrase subunit B from Chlamydia pneumoniae (Chlamydophila pneumoniae).